The following is a 224-amino-acid chain: Putative ribonuclease Z (224 aa).

Zn(2+)-binding residues include Asp-120 and His-184.

Belongs to the RNase Z family. In terms of assembly, homodimer. Zn(2+) is required as a cofactor.

It carries out the reaction Endonucleolytic cleavage of RNA, removing extra 3' nucleotides from tRNA precursor, generating 3' termini of tRNAs. A 3'-hydroxy group is left at the tRNA terminus and a 5'-phosphoryl group is left at the trailer molecule.. In terms of biological role, zinc phosphodiesterase, which displays some tRNA 3'-processing endonuclease activity. Probably involved in tRNA maturation, by removing a 3'-trailer from precursor tRNA. This chain is Putative ribonuclease Z (rnz), found in Mycobacterium tuberculosis (strain CDC 1551 / Oshkosh).